A 329-amino-acid polypeptide reads, in one-letter code: Ig gamma-2 chain C region (329 aa).

Cystine bridges form between Cys-28–Cys-79, Cys-142–Cys-202, and Cys-248–Cys-308. N-linked (GlcNAc...) asparagine glycosylation is present at Asn-178.

Its subcellular location is the secreted. The protein is Ig gamma-2 chain C region of Cavia porcellus (Guinea pig).